We begin with the raw amino-acid sequence, 1298 residues long: Activating molecule in BECN1-regulated autophagy protein 1 (1298 aa).

The tract at residues 1–22 (MKVVPEKNAVRILWGRERGARA) is interaction with DDB1. Residue Lys-45 forms a Glycyl lysine isopeptide (Lys-Gly) (interchain with G-Cter in ubiquitin) linkage. WD repeat units lie at residues 51-90 (DSPR…CVHS), 93-133 (GHRR…ESWF), and 135-175 (DSNN…AVVK). Ser-52 carries the phosphoserine; by MTOR modification. The span at 254–266 (IQVGEQSTVQDSA) shows a compositional bias: polar residues. Residues 254-284 (IQVGEQSTVQDSATPSPPPPPPQPSTERPRT) are disordered. The span at 268–277 (PSPPPPPPQP) shows a compositional bias: pro residues. The PxP motif 1 motif lies at 275 to 281 (PQPSTER). A Phosphoserine modification is found at Ser-328. Positions 343–413 (FVQTEPFHPP…SRYHREIAPG (71 aa)) are disordered. A compositionally biased stretch (polar residues) spans 354–385 (QASSTQQDQGLLNRPSAFSTVQSSTAGNTLRN). A phosphoserine mark is found at Ser-394 and Ser-443. 3 stretches are compositionally biased toward polar residues: residues 458–467 (SQASVYTSAT), 547–561 (HQPT…SNLS), and 590–601 (NYSSGEASSSWQ). Disordered stretches follow at residues 458-494 (SQAS…NSGS), 538-561 (IESE…SNLS), 590-690 (NYSS…DSLR), and 747-796 (RYQQ…NARM). 2 stretches are compositionally biased toward low complexity: residues 602-614 (VPSS…SSGS) and 628-639 (SSSRLELSSSAS). Ser-635 and Ser-639 each carry phosphoserine. A compositionally biased stretch (polar residues) spans 661 to 674 (YTQSSRSGTVSQEA). Arg-747 bears the Asymmetric dimethylarginine mark. The segment covering 772 to 781 (TDLEFEDFED) has biased composition (acidic residues). Phosphoserine; by IKKA is present on Ser-1043. An LIR motif is present at residues 1043–1052 (SGVEYYWDQL). Residues 1060-1075 (HSNSRSSERPGTSRAT) are compositionally biased toward polar residues. The segment at 1060–1079 (HSNSRSSERPGTSRATWRTD) is disordered. Short sequence motifs (TQT motif) lie at residues 1104-1106 (TQT) and 1116-1118 (TQT). 3 disordered regions span residues 1112–1143 (QNAE…YGAS), 1190–1214 (RSSQ…SRGL), and 1227–1298 (SPRT…PRNR). The segment covering 1191–1212 (SSQTGTEPGAAHTSSPQPSTSR) has biased composition (polar residues). Residue Ser-1205 is modified to Phosphoserine. The PxP motif 2 motif lies at 1206-1212 (PQPSTSR).

This sequence belongs to the WD repeat AMBRA1 family. In terms of assembly, component of the DCX(AMBRA1) E3 ubiquitin ligase complex, also named CRL4(AMBRA1), at least composed of CUL4 (CUL4A or CUL4B), DDB1, AMBRA1 and RBX1. Interacts with BECN1. Probably forms a complex with BECN1 and PIK3C3. Interacts with BECN2. Interacts with BCL2; leading to prevent interaction with BCN1 and autophagy, interaction is disrupted upon autophagy induction. Interacts with ULK1. Interacts (via PxP motifs) with PPP2CA; enhancing interaction between PPP2CA and MYC or FOXO3. Forms a complex with PPP2CA and BECN1; AMBRA1 and BECN1 components of the complex regulate MYC stability via different pathways. Interacts (TQT motifs) with DYNLL1 and DYNLL2; tethering AMBRA1 and the BECN1-PIK3C3 complex in absence of autophagy. Interacts with TRAF6; interaction is required to mediate 'Lys-63'-linked ubiquitination of ULK1. Interacts with TRIM32; promoting activation of ULK1 by TRIM32 via unanchored 'Lys-63'-linked polyubiquitin chains. Interacts with PRKN. Interacts (via LIR motif) with LC3 (MAP1LC3A, MAP1LC3B or MAP1LC3C). Interacts with HUWE1. Interacts with PTK2/FAK. Interacts with SRC; required for SRC trafficking to autophagosomes. In terms of processing, phosphorylation at Ser-52 by MTOR inhibits its ability to regulate autophagy and mediate ubiquitination of ULK1. Phosphorylation by ULK1 in response to autophagy induction abolishes interaction with DYNLL1 and DYNLL2, releasing AMBRA1 from the cytoskeletal docking site to induce autophagosome nucleation. Phosphorylation by MTOR inhibits interaction with PPP2CA and subsequent dephosphorylation of MYC. Phosphorylation at Ser-1043 by CHUK/IKKA promotes its interaction with ATG8 family proteins GABARAP and MAP1LC3B and its mitophagic activity. Post-translationally, ubiquitinated by RNF2 via 'Lys-48'-linkage in unstressed cells, leading to its degradation by the proteasome. Induction of autophagy promotes stabilization via interaction with CUL4 (CUL4A or CUL4B) and DDB1. Upon prolonged starvation, ubiquitinated and degraded, terminating the autophagy response. Undergoes proteolytic processing by caspase-6 (CASP6), caspase-7 (CASP7) and caspase-8 (CASP8) during apoptosis, resulting in the dismantling of the autophagic machinery and the accomplishment of the programmed cell death program. Also cleaved by calpains during apoptosis, which mediate a complete proteolytic degradation.

The protein localises to the endoplasmic reticulum. It localises to the cytoplasm. The protein resides in the cytoskeleton. Its subcellular location is the cytoplasmic vesicle. It is found in the autophagosome. The protein localises to the mitochondrion. It localises to the cytosol. The protein resides in the nucleus. Its subcellular location is the cell junction. It is found in the focal adhesion. It participates in protein modification; protein ubiquitination. Substrate-recognition component of a DCX (DDB1-CUL4-X-box) E3 ubiquitin-protein ligase complex involved in cell cycle control and autophagy. The DCX(AMBRA1) complex specifically mediates the polyubiquitination of target proteins such as BECN1, CCND1, CCND2, CCND3, ELOC and ULK1. Acts as an upstream master regulator of the transition from G1 to S cell phase: AMBRA1 specifically recognizes and binds phosphorylated cyclin-D (CCND1, CCND2 and CCND3), leading to cyclin-D ubiquitination by the DCX(AMBRA1) complex and subsequent degradation. By controlling the transition from G1 to S phase and cyclin-D degradation, AMBRA1 acts as a tumor suppressor that promotes genomic integrity during DNA replication and counteracts developmental abnormalities and tumor growth. AMBRA1 also regulates the cell cycle by promoting MYC dephosphorylation and degradation independently of the DCX(AMBRA1) complex: acts via interaction with the catalytic subunit of protein phosphatase 2A (PPP2CA), which enhances interaction between PPP2CA and MYC, leading to MYC dephosphorylation and degradation. Acts as a regulator of Cul5-RING (CRL5) E3 ubiquitin-protein ligase complexes by mediating ubiquitination and degradation of Elongin-C (ELOC) component of CRL5 complexes. Acts as a key regulator of autophagy by modulating the BECN1-PIK3C3 complex: controls protein turnover during neuronal development, and regulates normal cell survival and proliferation. In normal conditions, AMBRA1 is tethered to the cytoskeleton via interaction with dyneins DYNLL1 and DYNLL2. Upon autophagy induction, AMBRA1 is released from the cytoskeletal docking site to induce autophagosome nucleation by mediating ubiquitination of proteins involved in autophagy. The DCX(AMBRA1) complex mediates 'Lys-63'-linked ubiquitination of BECN1, increasing the association between BECN1 and PIK3C3 to promote PIK3C3 activity. In collaboration with TRAF6, AMBRA1 mediates 'Lys-63'-linked ubiquitination of ULK1 following autophagy induction, promoting ULK1 stability and kinase activity. Also activates ULK1 via interaction with TRIM32: TRIM32 stimulates ULK1 through unanchored 'Lys-63'-linked polyubiquitin chains. Also acts as an activator of mitophagy via interaction with PRKN and LC3 proteins (MAP1LC3A, MAP1LC3B or MAP1LC3C); possibly by bringing damaged mitochondria onto autophagosomes. Also activates mitophagy by acting as a cofactor for HUWE1; acts by promoting HUWE1-mediated ubiquitination of MFN2. AMBRA1 is also involved in regulatory T-cells (Treg) differentiation by promoting FOXO3 dephosphorylation independently of the DCX(AMBRA1) complex: acts via interaction with PPP2CA, which enhances interaction between PPP2CA and FOXO3, leading to FOXO3 dephosphorylation and stabilization. May act as a regulator of intracellular trafficking, regulating the localization of active PTK2/FAK and SRC. Also involved in transcription regulation by acting as a scaffold for protein complexes at chromatin. The protein is Activating molecule in BECN1-regulated autophagy protein 1 of Homo sapiens (Human).